The primary structure comprises 78 residues: Large ribosomal subunit protein bL28 (78 aa).

The protein belongs to the bacterial ribosomal protein bL28 family.

The polypeptide is Large ribosomal subunit protein bL28 (Hydrogenovibrio crunogenus (strain DSM 25203 / XCL-2) (Thiomicrospira crunogena)).